The primary structure comprises 261 residues: Cytochrome c oxidase subunit 3 (261 aa).

The Mitochondrial matrix segment spans residues 1–15; it reads MTHQTHAYHMVNPSP. A helical transmembrane segment spans residues 16–34; the sequence is WPLTGALSALLMTSGLAMW. Over 35–40 the chain is Mitochondrial intermembrane; the sequence is FHFNSV. Residues 41 to 66 traverse the membrane as a helical segment; the sequence is TLLTLGLTTNMLTMYQWWRDIIREST. Over 67–72 the chain is Mitochondrial matrix; that stretch reads FQGHHT. The helical transmembrane segment at 73 to 105 threads the bilayer; the sequence is PTVQKGLRYGMILFIISEVLFFTGFFWAFYHSS. Topologically, residues 106–128 are mitochondrial intermembrane; it reads LAPTPELGGCWPPTGISPLNPLE. The chain crosses the membrane as a helical span at residues 129-152; the sequence is VPLLNTSVLLASGVSITWAHHSLM. Topologically, residues 153-155 are mitochondrial matrix; that stretch reads EGN. Residues 156–183 traverse the membrane as a helical segment; that stretch reads RNHMLQALFITIALGVYFTLLQASEYYE. The Mitochondrial intermembrane portion of the chain corresponds to 184 to 190; the sequence is APFTISD. Residues 191–223 form a helical membrane-spanning segment; the sequence is GIYGSTFFVATGFHGLHVIIGSTFLIVCFFRQL. Residues 224–232 lie on the Mitochondrial matrix side of the membrane; sequence KFHFTSNHH. Residues 233 to 256 form a helical membrane-spanning segment; it reads FGFEAAAWYWHFVDVVWLFLYVSI. The Mitochondrial intermembrane segment spans residues 257–261; sequence YWWGS.

Belongs to the cytochrome c oxidase subunit 3 family. Component of the cytochrome c oxidase (complex IV, CIV), a multisubunit enzyme composed of 14 subunits. The complex is composed of a catalytic core of 3 subunits MT-CO1, MT-CO2 and MT-CO3, encoded in the mitochondrial DNA, and 11 supernumerary subunits COX4I, COX5A, COX5B, COX6A, COX6B, COX6C, COX7A, COX7B, COX7C, COX8 and NDUFA4, which are encoded in the nuclear genome. The complex exists as a monomer or a dimer and forms supercomplexes (SCs) in the inner mitochondrial membrane with NADH-ubiquinone oxidoreductase (complex I, CI) and ubiquinol-cytochrome c oxidoreductase (cytochrome b-c1 complex, complex III, CIII), resulting in different assemblies (supercomplex SCI(1)III(2)IV(1) and megacomplex MCI(2)III(2)IV(2)).

It is found in the mitochondrion inner membrane. The enzyme catalyses 4 Fe(II)-[cytochrome c] + O2 + 8 H(+)(in) = 4 Fe(III)-[cytochrome c] + 2 H2O + 4 H(+)(out). In terms of biological role, component of the cytochrome c oxidase, the last enzyme in the mitochondrial electron transport chain which drives oxidative phosphorylation. The respiratory chain contains 3 multisubunit complexes succinate dehydrogenase (complex II, CII), ubiquinol-cytochrome c oxidoreductase (cytochrome b-c1 complex, complex III, CIII) and cytochrome c oxidase (complex IV, CIV), that cooperate to transfer electrons derived from NADH and succinate to molecular oxygen, creating an electrochemical gradient over the inner membrane that drives transmembrane transport and the ATP synthase. Cytochrome c oxidase is the component of the respiratory chain that catalyzes the reduction of oxygen to water. Electrons originating from reduced cytochrome c in the intermembrane space (IMS) are transferred via the dinuclear copper A center (CU(A)) of subunit 2 and heme A of subunit 1 to the active site in subunit 1, a binuclear center (BNC) formed by heme A3 and copper B (CU(B)). The BNC reduces molecular oxygen to 2 water molecules using 4 electrons from cytochrome c in the IMS and 4 protons from the mitochondrial matrix. This Neotragus moschatus (Suni) protein is Cytochrome c oxidase subunit 3 (MT-CO3).